A 21-amino-acid polypeptide reads, in one-letter code: Peptide Hact-2 (21 aa).

Disulfide bonds link Cys1/Cys18, Cys5/Cys14, and Cys9/Cys20.

In terms of tissue distribution, expressed in tentacles.

The protein localises to the nematocyst. It is found in the secreted. In terms of biological role, peptide of unknown function. Does not exhibit antimicrobial activity against Escherichia coli and Staphylococcus aureus. Promotes cell proliferation of human fibroblast skin cells. Does not exhibit any effect on voltage-gated ion channels, including potassium, sodium, and calcium channels. This is Peptide Hact-2 from Heliofungia actiniformis (Mushroom coral).